Here is an 83-residue protein sequence, read N- to C-terminus: Large ribosomal subunit protein bL31B (83 aa).

It belongs to the bacterial ribosomal protein bL31 family. Type B subfamily. Part of the 50S ribosomal subunit.

Its function is as follows. Binds the 23S rRNA. This is Large ribosomal subunit protein bL31B from Lactobacillus delbrueckii subsp. bulgaricus (strain ATCC 11842 / DSM 20081 / BCRC 10696 / JCM 1002 / NBRC 13953 / NCIMB 11778 / NCTC 12712 / WDCM 00102 / Lb 14).